The chain runs to 85 residues: Acylphosphatase (85 aa).

Residues 3–85 form the Acylphosphatase-like domain; it reads AARFVVSGVV…PARFRRLKTL (83 aa). Catalysis depends on residues Arg-18 and Asn-36. A disordered region spans residues 66 to 85; the sequence is PPRSRRSRARPARFRRLKTL.

The protein belongs to the acylphosphatase family.

The catalysed reaction is an acyl phosphate + H2O = a carboxylate + phosphate + H(+). The sequence is that of Acylphosphatase (acyP) from Xanthomonas axonopodis pv. citri (strain 306).